The following is a 552-amino-acid chain: CTP synthase (552 aa).

The segment at 1 to 270 (MTKFVFVTGG…DGLICDKLRL (270 aa)) is amidoligase domain. CTP is bound at residue serine 13. Position 13 (serine 13) interacts with UTP. ATP is bound by residues 14-19 (SLGKGI) and aspartate 71. Mg(2+) contacts are provided by aspartate 71 and glutamate 144. Residues 151–153 (DIE), 191–196 (KTKPTQ), and lysine 227 contribute to the CTP site. UTP contacts are provided by residues 191-196 (KTKPTQ) and lysine 227. The Glutamine amidotransferase type-1 domain occupies 295–548 (QIAMVGKYVE…IKAAVEHQKP (254 aa)). Position 357 (glycine 357) interacts with L-glutamine. Cysteine 384 (nucleophile; for glutamine hydrolysis) is an active-site residue. L-glutamine-binding positions include 385-388 (LGMQ) and glutamate 408. The tract at residues 432–451 (KTRSENSDLGGTMRLGAQSS) is disordered. Arginine 474 is a binding site for L-glutamine. Catalysis depends on residues histidine 521 and glutamate 523.

The protein belongs to the CTP synthase family. Homotetramer.

The catalysed reaction is UTP + L-glutamine + ATP + H2O = CTP + L-glutamate + ADP + phosphate + 2 H(+). It catalyses the reaction L-glutamine + H2O = L-glutamate + NH4(+). It carries out the reaction UTP + NH4(+) + ATP = CTP + ADP + phosphate + 2 H(+). It functions in the pathway pyrimidine metabolism; CTP biosynthesis via de novo pathway; CTP from UDP: step 2/2. With respect to regulation, allosterically activated by GTP, when glutamine is the substrate; GTP has no effect on the reaction when ammonia is the substrate. The allosteric effector GTP functions by stabilizing the protein conformation that binds the tetrahedral intermediate(s) formed during glutamine hydrolysis. Inhibited by the product CTP, via allosteric rather than competitive inhibition. In terms of biological role, catalyzes the ATP-dependent amination of UTP to CTP with either L-glutamine or ammonia as the source of nitrogen. Regulates intracellular CTP levels through interactions with the four ribonucleotide triphosphates. The polypeptide is CTP synthase (Acidovorax sp. (strain JS42)).